A 504-amino-acid polypeptide reads, in one-letter code: Maturase K (504 aa).

The protein belongs to the intron maturase 2 family. MatK subfamily.

It localises to the plastid. The protein resides in the chloroplast. Usually encoded in the trnK tRNA gene intron. Probably assists in splicing its own and other chloroplast group II introns. The sequence is that of Maturase K from Pachira aquatica (Guiana chestnut).